The primary structure comprises 520 residues: GMP synthase [glutamine-hydrolyzing] (520 aa).

The 198-residue stretch at 3–200 (AIAIIDFGSQ…FLDIANCKRD (198 aa)) folds into the Glutamine amidotransferase type-1 domain. Catalysis depends on Cys84, which acts as the Nucleophile. Catalysis depends on residues His175 and Glu177. In terms of domain architecture, GMPS ATP-PPase spans 201 to 386 (WTMKSIIEKQ…IGLSNEIIFQ (186 aa)). Residue 228–234 (SGGVDSS) coordinates ATP.

As to quaternary structure, homodimer.

The enzyme catalyses XMP + L-glutamine + ATP + H2O = GMP + L-glutamate + AMP + diphosphate + 2 H(+). It functions in the pathway purine metabolism; GMP biosynthesis; GMP from XMP (L-Gln route): step 1/1. Catalyzes the synthesis of GMP from XMP. In Wolbachia sp. subsp. Brugia malayi (strain TRS), this protein is GMP synthase [glutamine-hydrolyzing].